Reading from the N-terminus, the 210-residue chain is Riboflavin kinase (210 aa).

The tract at residues 1–81 (MECRERRLAA…DLLRYFNIAS (81 aa)) is H-T-H motif-like. The tract at residues 82 to 210 (IRLVGRVVSG…GDVVEVEVLL (129 aa)) is riboflavin kinase. 91–96 (GLGEGA) serves as a coordination point for CDP. 2 residues coordinate Mg(2+): threonine 120 and asparagine 122. 2 residues coordinate FMN: threonine 177 and glutamate 185. Residue 190–193 (VKLR) coordinates CDP.

Belongs to the archaeal riboflavin kinase family. Mg(2+) serves as cofactor.

It carries out the reaction riboflavin + CTP = CDP + FMN + H(+). It functions in the pathway cofactor biosynthesis; FMN biosynthesis; FMN from riboflavin (CTP route): step 1/1. Functionally, catalyzes the CTP-dependent phosphorylation of riboflavin (vitamin B2) to form flavin mononucleotide (FMN). The polypeptide is Riboflavin kinase (ribK) (Pyrobaculum arsenaticum (strain DSM 13514 / JCM 11321 / PZ6)).